The sequence spans 385 residues: MKWLLLLSLVVLSECLVKVPLVRKKSLRQNLIKNGKLKDFLKTHKHNPASKYFPEAAALIGDEPLENYLDTEYFGTIGIGTPAQDFTVIFDTGSSNLWVPSVYCSSLACSDHNQFNPDDSSTFEATSQELSITYGTGSMTGILGYDTVQVGGISDTNQIFGLSETEPGSFLYYAPFDGILGLAYPSISASGATPVFDNLWDQGLVSQDLFSVYLSSNDDSGSVVLLGGIDSSYYTGSLNWVPVSVEGYWQITLDSITMDGETIACSGGCQAIVDTGTSLLTGPTSAIANIQSDIGASENSDGEMVISCSSIDSLPDIVFTINGVQYPLSPSAYILQDDDSCTSGFEGMDVPTSSGELWILGDVFIRQYYTVFDRANNKVGLAPVA.

The signal sequence occupies residues 1-15 (MKWLLLLSLVVLSEC). A propeptide spans 16–59 (LVKVPLVRKKSLRQNLIKNGKLKDFLKTHKHNPASKYFPEAAAL) (activation peptide). The Peptidase A1 domain occupies 73-382 (YFGTIGIGTP…DRANNKVGLA (310 aa)). Residue D91 is part of the active site. The cysteines at positions 104 and 109 are disulfide-linked. The residue at position 127 (S127) is a Phosphoserine. A disulfide bridge connects residues C265 and C269. The active site involves D274. Cysteines 308 and 341 form a disulfide.

The protein belongs to the peptidase A1 family. In terms of processing, minor amounts of the active enzyme occur with 'Ala-58' at the amino end.

The protein localises to the secreted. The enzyme catalyses Preferential cleavage: hydrophobic, preferably aromatic, residues in P1 and P1' positions. Cleaves 1-Phe-|-Val-2, 4-Gln-|-His-5, 13-Glu-|-Ala-14, 14-Ala-|-Leu-15, 15-Leu-|-Tyr-16, 16-Tyr-|-Leu-17, 23-Gly-|-Phe-24, 24-Phe-|-Phe-25 and 25-Phe-|-Tyr-26 bonds in the B chain of insulin.. Its function is as follows. Shows particularly broad specificity; although bonds involving phenylalanine and leucine are preferred, many others are also cleaved to some extent. The chain is Pepsin A (PGA) from Sus scrofa (Pig).